We begin with the raw amino-acid sequence, 262 residues long: LysM domain-containing protein ARB_03438 (262 aa).

The signal sequence occupies residues 1–22 (MVSIPLILGAIILLGTRKAATA). Residues 31 to 75 (FAVTAATDDTCQSLGAQWGIGMAQFLKWNPGVNCNALVAGKTYCL) enclose the LysM 1 domain. A disordered region spans residues 85-112 (TASLTPSPQVPTTSRATQTMTSKASTGT). Polar residues predominate over residues 86 to 112 (ASLTPSPQVPTTSRATQTMTSKASTGT). One can recognise a LysM 2 domain in the interval 132-179 (FYHPVSPGDTCQSIVDRYKAFTLDQFYTWNPSVGKNCESLWLGYYVCT). Residues 184–240 (GPNSPSQQPPSQQPPSQQSPSQQSPSQQSPSQQPPSQQPPSQQPPSQQSNTSQQTQP) are disordered. Low complexity predominate over residues 197 to 214 (PPSQQSPSQQSPSQQSPS). The segment covering 215–226 (QQPPSQQPPSQQ) has biased composition (pro residues). Residues 227–240 (PPSQQSNTSQQTQP) show a composition bias toward low complexity. Asn-233 carries an N-linked (GlcNAc...) asparagine glycan.

Its subcellular location is the secreted. Functionally, might have a role in sequestration of chitin oligosaccharides (breakdown products of fungal cell walls that are released during invasion and act as triggers of host immunity) to dampen host defense. The protein is LysM domain-containing protein ARB_03438 of Arthroderma benhamiae (strain ATCC MYA-4681 / CBS 112371) (Trichophyton mentagrophytes).